The primary structure comprises 111 residues: MKKRLIGFLVLVPALIMWGITLIESNKKTPVEVLESAWDEFGLFSFEIGITDPAITIGMDQTKSEAKLREYLKDNLSREAKEKYKIYIFKDDTDKLEKEHQEYLKENNLNK.

Positions 1 to 24 (MKKRLIGFLVLVPALIMWGITLIE) are cleaved as a signal peptide.

In Bacillus subtilis (strain 168), this protein is Prophage-derived-like uncharacterized protein YozM (yozM).